Here is a 124-residue protein sequence, read N- to C-terminus: Small ribosomal subunit protein eS25 (124 aa).

Basic and acidic residues predominate over residues 1-22 (MPPKDSKQKKDAGKSKKDKDPV). Positions 1 to 37 (MPPKDSKQKKDAGKSKKDKDPVNKSGGKAKKKKWSKG) are disordered. Over residues 27 to 37 (GKAKKKKWSKG) the composition is skewed to basic residues.

This sequence belongs to the eukaryotic ribosomal protein eS25 family. As to quaternary structure, component of the small ribosomal subunit.

Its subcellular location is the cytoplasm. Functionally, component of the small ribosomal subunit. The ribosome is a large ribonucleoprotein complex responsible for the synthesis of proteins in the cell. The chain is Small ribosomal subunit protein eS25 (rps25) from Danio rerio (Zebrafish).